The primary structure comprises 399 residues: Methylthioribose kinase (399 aa).

Residues Asn40, Lys57, and 111-113 (EDL) contribute to the ATP site. Asp229 lines the substrate pocket. 246–248 (DAE) contributes to the ATP binding site. Arg344 contacts substrate.

This sequence belongs to the methylthioribose kinase family. In terms of assembly, homodimer.

It catalyses the reaction 5-(methylsulfanyl)-D-ribose + ATP = 5-(methylsulfanyl)-alpha-D-ribose 1-phosphate + ADP + H(+). It participates in amino-acid biosynthesis; L-methionine biosynthesis via salvage pathway; S-methyl-5-thio-alpha-D-ribose 1-phosphate from S-methyl-5'-thioadenosine (hydrolase route): step 2/2. In terms of biological role, catalyzes the phosphorylation of methylthioribose into methylthioribose-1-phosphate. The sequence is that of Methylthioribose kinase from Erwinia tasmaniensis (strain DSM 17950 / CFBP 7177 / CIP 109463 / NCPPB 4357 / Et1/99).